Consider the following 218-residue polypeptide: MFSPSVYSEIIATLPPSVRLVAVTKTKAIADIEAAYGAGIRDFAESRIQEALPKIEALANYQDINWHFIGRLQSNKARKVVENFTYIHSVDNLAIAVKLDRIAEELNKFPQGLLQIKLLPDENKSGWTREELKLDLPQLELLKNLKICGLMTILPLGLSPGDRQLTFGELKNLATAINQQSSLSLTELSMGMSGDYPEAIAAGATMIRLGTILFGDRL.

Lysine 25 is modified (N6-(pyridoxal phosphate)lysine).

This sequence belongs to the pyridoxal phosphate-binding protein YggS/PROSC family.

Functionally, pyridoxal 5'-phosphate (PLP)-binding protein, which is involved in PLP homeostasis. In Synechocystis sp. (strain ATCC 27184 / PCC 6803 / Kazusa), this protein is Pyridoxal phosphate homeostasis protein.